A 458-amino-acid polypeptide reads, in one-letter code: UDP-N-acetylmuramate--L-alanine ligase (458 aa).

112–118 (GTHGKTT) contacts ATP.

This sequence belongs to the MurCDEF family.

The protein resides in the cytoplasm. The enzyme catalyses UDP-N-acetyl-alpha-D-muramate + L-alanine + ATP = UDP-N-acetyl-alpha-D-muramoyl-L-alanine + ADP + phosphate + H(+). The protein operates within cell wall biogenesis; peptidoglycan biosynthesis. In terms of biological role, cell wall formation. This Syntrophotalea carbinolica (strain DSM 2380 / NBRC 103641 / GraBd1) (Pelobacter carbinolicus) protein is UDP-N-acetylmuramate--L-alanine ligase.